The primary structure comprises 434 residues: Oxysterol-binding protein homolog 4 (434 aa).

The interval Ser7–Ala29 is ALPS motif. Residues Ser16 to Asp366 are OSBP-related domain (ORD). Leu24–Ala29 contacts a 1,2-diacyl-sn-glycero-3-phospho-(1D-myo-inositol 4-phosphate). Gln96 is a binding site for 20-hydroxycholesterol. Residue Gln96 participates in 25-hydroxycholesterol binding. 2 residues coordinate 7beta-hydroxycholesterol: Gln96 and Arg100. Gln96 lines the cholesterol pocket. Ergosterol is bound at residue Gln96. Residues Lys109–Asn112, His143–His144, Lys336, Glu340, and Arg344 each bind a 1,2-diacyl-sn-glycero-3-phospho-(1D-myo-inositol 4-phosphate). Thr370 carries the phosphothreonine modification. Position 389 is a phosphoserine (Ser389).

The protein belongs to the OSBP family.

The protein localises to the cytoplasm. Its subcellular location is the golgi apparatus membrane. In terms of biological role, lipid transport protein (LTP) involved in non-vesicular transfer of lipids between membranes. Functions in phosphoinositide-coupled directional transport of various lipids by carrying the lipid molecule in a hydrophobic pocket and transferring it between membranes through the cytosol. Involved in maintenance of intracellular sterol distribution and homeostasis. Involved in lipid countertransport between the Golgi complex and membranes of the endoplasmic reticulum. Specifically exchanges sterol with phosphatidylinositol 4-phosphate (PI4P), delivering sterol to the Golgi in exchange for PI4P, which is delivered to the ER-localized PI4P phosphatase SAC1 for degradation. Thus, by maintaining a PI4P gradient at the ER/Golgi interface, SAC1 may drive PS transport. Displays a similar affinity for PI4P and sterols. Binds sterol and PI4P in a mutually exclusive manner. Involved in ergosterol transport from the plasma membrane (PM) to the ER. Mediates sterol transport from the ER to mitochondria. Involved in the negative regulation of Golgi-derived transport vesicle biogenesis. Plays a role in the positive regulation of vesicular transport of ceramide from the ER to the Golgi, negatively regulating COPII-mediated ER export of cargos. This Saccharomyces cerevisiae (strain ATCC 204508 / S288c) (Baker's yeast) protein is Oxysterol-binding protein homolog 4.